The sequence spans 293 residues: Probable metal transport system membrane protein TC_0698 (293 aa).

7 helical membrane-spanning segments follow: residues 18 to 38, 41 to 61, 68 to 88, 101 to 121, 142 to 162, 186 to 206, and 242 to 262; these read SLLAAFGASIAGGIVGSYIVV, IVSISGSIAHSILGGVGIALW, LPISPLHGAIASAIFVAICIG, IISMIWSIGMAVGMLCISKLP, DLYFLGILDLLIVATVSICHT, FLLLILTAITTVVLMYVMGVI, and FLGIILAYILDLPVGPIIAIL.

It belongs to the ABC-3 integral membrane protein family.

It is found in the cell inner membrane. In terms of biological role, part of an ATP-driven transport system TC_0696/TC_0697/TC_0698 for a metal. The sequence is that of Probable metal transport system membrane protein TC_0698 from Chlamydia muridarum (strain MoPn / Nigg).